A 183-amino-acid chain; its full sequence is NAD(P)H-quinone oxidoreductase subunit I, chloroplastic (183 aa).

4Fe-4S ferredoxin-type domains follow at residues 55–84 (GRIH…VDWE) and 95–124 (KNYS…MTEE). [4Fe-4S] cluster is bound by residues C64, C67, C70, C74, C104, C107, C110, and C114.

It belongs to the complex I 23 kDa subunit family. NDH is composed of at least 16 different subunits, 5 of which are encoded in the nucleus. The cofactor is [4Fe-4S] cluster.

It is found in the plastid. It localises to the chloroplast thylakoid membrane. The enzyme catalyses a plastoquinone + NADH + (n+1) H(+)(in) = a plastoquinol + NAD(+) + n H(+)(out). The catalysed reaction is a plastoquinone + NADPH + (n+1) H(+)(in) = a plastoquinol + NADP(+) + n H(+)(out). NDH shuttles electrons from NAD(P)H:plastoquinone, via FMN and iron-sulfur (Fe-S) centers, to quinones in the photosynthetic chain and possibly in a chloroplast respiratory chain. The immediate electron acceptor for the enzyme in this species is believed to be plastoquinone. Couples the redox reaction to proton translocation, and thus conserves the redox energy in a proton gradient. The sequence is that of NAD(P)H-quinone oxidoreductase subunit I, chloroplastic from Marchantia polymorpha (Common liverwort).